A 233-amino-acid chain; its full sequence is Preprocaerulein type-4 (233 aa).

An N-terminal signal peptide occupies residues 1–26; sequence MFKGILLCVLFAVLSANPLSQPEGFA. The propeptide occupies 27–72; sequence DEERDVRGLASLLGKALKATLKIGTHFLGGAPQQREANDERRFADG. At Gln73 the chain carries Pyrrolidone carboxylic acid. Tyr76 is modified (sulfotyrosine). Phe82 is subject to Phenylalanine amide. The propeptide occupies 86 to 87; sequence DG. Residue Gln88 is modified to Pyrrolidone carboxylic acid. Tyr91 is modified (sulfotyrosine). Phe97 bears the Phenylalanine amide mark. A propeptide spanning residues 101–151 is cleaved from the precursor; the sequence is DDEDDVHERDVRGFGSFLGKALKAALKIGANALGGAPQQREANDERRFADG. Gln152 bears the Pyrrolidone carboxylic acid mark. Residue Tyr155 is modified to Sulfotyrosine. Phenylalanine amide is present on Phe161. A propeptide spanning residues 165 to 215 is cleaved from the precursor; sequence DDEDDVNERDVRGFGSFLGKALKAALKIGANALGGSPQQREANDERRFADG. Residues 197–233 are disordered; it reads LGGSPQQREANDERRFADGQQDYTGWMDFGRRNGEDD. The residue at position 216 (Gln216) is a Pyrrolidone carboxylic acid. The residue at position 219 (Tyr219) is a Sulfotyrosine. Position 225 is a phenylalanine amide (Phe225). Residues 229–233 constitute a propeptide that is removed on maturation; it reads NGEDD.

Belongs to the gastrin/cholecystokinin family. As to expression, expressed by the skin glands.

The protein localises to the secreted. Its function is as follows. The pharmacological activities of caerulein are quite similar to the physiological activities of gastrin and related peptides. This Xenopus laevis (African clawed frog) protein is Preprocaerulein type-4.